A 100-amino-acid polypeptide reads, in one-letter code: Small ribosomal subunit protein uS14c (100 aa).

Belongs to the universal ribosomal protein uS14 family. As to quaternary structure, part of the 30S ribosomal subunit.

It localises to the plastid. Binds 16S rRNA, required for the assembly of 30S particles. This Cuscuta gronovii (Common dodder) protein is Small ribosomal subunit protein uS14c (rps14).